Reading from the N-terminus, the 686-residue chain is U3 small nucleolar RNA-associated protein 4 homolog (686 aa).

WD repeat units follow at residues 7–50, 51–92, 93–135, 136–181, 182–226, 227–275, 276–317, 318–377, 378–427, 428–475, 476–516, 517–566, 567–627, and 628–666; these read HRVR…ANYF, QEKF…QALN, IKYA…PDKI, QFER…AVHK, MIVD…SATG, TLVK…SSEK, QWVR…LMEK, VEVK…PLSK, NADH…NISL, KRVS…KHLH, AFQP…VKQL, KLHC…WSRT, VQKQ…FPPT, and NESD…AVER. Lys-321 participates in a covalent cross-link: Glycyl lysine isopeptide (Lys-Gly) (interchain with G-Cter in SUMO2).

Interacts with HIVEP1 Interacts with NOL11. Part of the small subunit (SSU) processome, composed of more than 70 proteins and the RNA chaperone small nucleolar RNA (snoRNA) U3. May be a component of the proposed t-UTP subcomplex of the ribosomal small subunit (SSU) processome containing at least UTP4, WDR43, HEATR1, UTP15, WDR75. Post-translationally, may be phosphorylated during mitosis; may control the association of this protein with WRD43 and UTP15.

The protein localises to the nucleus. It is found in the nucleolus. Its subcellular location is the chromosome. Functionally, ribosome biogenesis factor. Involved in nucleolar processing of pre-18S ribosomal RNA. Part of the small subunit (SSU) processome, first precursor of the small eukaryotic ribosomal subunit. During the assembly of the SSU processome in the nucleolus, many ribosome biogenesis factors, an RNA chaperone and ribosomal proteins associate with the nascent pre-rRNA and work in concert to generate RNA folding, modifications, rearrangements and cleavage as well as targeted d Involved in SSU pre-rRNA processing at sites A', A0, 1 and 2b. Required for optimal pre-ribosomal RNA transcription by RNA polymerase. May be a transcriptional regulator. In terms of biological role, (Microbial infection) Acts as a positive regulator of HIVEP1 which specifically binds to the DNA sequence 5'-GGGACTTTCC-3' found in enhancer elements of numerous viral promoters such as those of HIV-1, SV40, or CMV. The sequence is that of U3 small nucleolar RNA-associated protein 4 homolog from Homo sapiens (Human).